The following is a 269-amino-acid chain: Cytochrome c oxidase subunit 3 (269 aa).

6 consecutive transmembrane segments (helical) span residues 46–66 (NSYYLFFISLILVISSMAFWF), 90–110 (GVILFIVSEALFFLAIFWAFF), 138–160 (PLLNTVILLSSGATVTYAHHSLI), 167–187 (ALYGSIITILLAIIFTVFQGV), 207–227 (FGTGFHGFHVIIGTIFLAVAL), and 247–267 (ILYWHFVDVVWLFLYVSIYYW).

It belongs to the cytochrome c oxidase subunit 3 family. As to quaternary structure, component of the cytochrome c oxidase (complex IV, CIV), a multisubunit enzyme composed of a catalytic core of 3 subunits and several supernumerary subunits. The complex exists as a monomer or a dimer and forms supercomplexes (SCs) in the inner mitochondrial membrane with ubiquinol-cytochrome c oxidoreductase (cytochrome b-c1 complex, complex III, CIII).

The protein localises to the mitochondrion inner membrane. It carries out the reaction 4 Fe(II)-[cytochrome c] + O2 + 8 H(+)(in) = 4 Fe(III)-[cytochrome c] + 2 H2O + 4 H(+)(out). Component of the cytochrome c oxidase, the last enzyme in the mitochondrial electron transport chain which drives oxidative phosphorylation. The respiratory chain contains 3 multisubunit complexes succinate dehydrogenase (complex II, CII), ubiquinol-cytochrome c oxidoreductase (cytochrome b-c1 complex, complex III, CIII) and cytochrome c oxidase (complex IV, CIV), that cooperate to transfer electrons derived from NADH and succinate to molecular oxygen, creating an electrochemical gradient over the inner membrane that drives transmembrane transport and the ATP synthase. Cytochrome c oxidase is the component of the respiratory chain that catalyzes the reduction of oxygen to water. Electrons originating from reduced cytochrome c in the intermembrane space (IMS) are transferred via the dinuclear copper A center (CU(A)) of subunit 2 and heme A of subunit 1 to the active site in subunit 1, a binuclear center (BNC) formed by heme A3 and copper B (CU(B)). The BNC reduces molecular oxygen to 2 water molecules using 4 electrons from cytochrome c in the IMS and 4 protons from the mitochondrial matrix. This chain is Cytochrome c oxidase subunit 3 (COIII), found in Podospora anserina (strain S / ATCC MYA-4624 / DSM 980 / FGSC 10383) (Pleurage anserina).